The chain runs to 530 residues: Probable flavin-containing monooxygenase 1 (530 aa).

Residues 17–21 (GAGVS), Glu38, 46–47 (VW), and 58–59 (QS) contribute to the FAD site. Position 219–222 (219–222 (SAID)) interacts with NADP(+).

This sequence belongs to the FMO family. Requires FAD as cofactor.

In terms of biological role, required for the establishment of systemic acquired resistance (SAR). Not involved in local defense mechanisms. Confers a salicylic acid-dependent (SA) resistance to virulent pathogens such as P.syringae pv tomato and H.parasitica. The chain is Probable flavin-containing monooxygenase 1 (FMO1) from Arabidopsis thaliana (Mouse-ear cress).